An 868-amino-acid chain; its full sequence is LPS-assembly protein LptD (868 aa).

Positions 1–24 (MLKGIHKYLLMCFGTVLFTVQANA) are cleaved as a signal peptide.

The protein belongs to the LptD family. Component of the lipopolysaccharide transport and assembly complex. Interacts with LptE and LptA.

Its subcellular location is the cell outer membrane. In terms of biological role, together with LptE, is involved in the assembly of lipopolysaccharide (LPS) at the surface of the outer membrane. This chain is LPS-assembly protein LptD, found in Francisella tularensis subsp. tularensis (strain FSC 198).